A 346-amino-acid chain; its full sequence is Cytosolic sulfotransferase 17 (346 aa).

89-94 (KTGTTW) is a 3'-phosphoadenylyl sulfate binding site. His-151 acts as the Proton acceptor in catalysis. Residues Arg-173, Ser-181, Tyr-239, and 309 to 311 (RKG) contribute to the 3'-phosphoadenylyl sulfate site.

It belongs to the sulfotransferase 1 family. As to expression, highly expressed in roots, stems and mature leaves. Low expression in young leaves and flowers. Barely detected in siliques.

The protein localises to the cytoplasm. It catalyses the reaction an aliphatic (Z)-desulfo-glucosinolate + 3'-phosphoadenylyl sulfate = a (Z)-omega-(methylsulfanyl)-N-sulfo-alkylhydroximate S-glucoside + adenosine 3',5'-bisphosphate + H(+). Its activity is regulated as follows. Inhibited by phosphoadenosine 5'-phosphate (PAP). Its function is as follows. Sulfotransferase that utilizes 3'-phospho-5'-adenylyl sulfate (PAPS) as sulfonate donor to catalyze the sulfate conjugation of desulfo-glucosinolates (dsGSs), the final step in the biosynthesis of the glucosinolate core structure. Substrate preference is desulfo-benzyl glucosinolate &gt; desulfo-6-methylthiohexyl glucosinolate. Increased specific activity with increasing chain length of desulfo-glucosinolate derived from methionine. Preferred substrate is desulfo-8-methylthiooctyl glucosinolate. This chain is Cytosolic sulfotransferase 17 (SOT17), found in Arabidopsis thaliana (Mouse-ear cress).